The primary structure comprises 309 residues: Olfactory receptor 7A17 (309 aa).

Over 1–25 (MEPENDTGISEFVLLGLSEEPELQP) the chain is Extracellular. The N-linked (GlcNAc...) asparagine glycan is linked to asparagine 5. The helical transmembrane segment at 26 to 46 (FLFGLFLSMYLVTVLGNLLII) threads the bilayer. Topologically, residues 47–54 (LATISDSH) are cytoplasmic. A helical membrane pass occupies residues 55–75 (LHTPMYFFLSNLSFADICFIS). Residues 76–99 (TTIPKMLINIQTQSRVITYAGCIT) are Extracellular-facing. The cysteines at positions 97 and 189 are disulfide-linked. Residues 100-120 (QMCFFVLFGGLDSLLLAVMAY) traverse the membrane as a helical segment. At 121-139 (DRFVAICHPLHYTVIMNPR) the chain is on the cytoplasmic side. Residues 140–160 (LCGLLVLASWMIAALNSLSQS) traverse the membrane as a helical segment. The Extracellular segment spans residues 161 to 197 (LMVLWLSFCTDLEIPHFFCELNQVIHLACSDTFLNDM). Residues 198–217 (GMYFAAGLLAGGPLVGILCS) form a helical membrane-spanning segment. The Cytoplasmic portion of the chain corresponds to 218 to 237 (YSKIVSSIRAISSAQGKYKA). Residues 238–258 (FSTCASHLSVVSLFCCTGLGV) traverse the membrane as a helical segment. Residues 259–271 (YLTSAATHNSHTS) lie on the Extracellular side of the membrane. A helical membrane pass occupies residues 272-292 (ATASVMYTVATPMLNPFIYSL). At 293–309 (RNKDIKRALKMSFRGKQ) the chain is on the cytoplasmic side.

This sequence belongs to the G-protein coupled receptor 1 family.

It is found in the cell membrane. In terms of biological role, odorant receptor. The polypeptide is Olfactory receptor 7A17 (OR7A17) (Homo sapiens (Human)).